Reading from the N-terminus, the 361-residue chain is Phospho-N-acetylmuramoyl-pentapeptide-transferase (361 aa).

10 helical membrane-spanning segments follow: residues 25 to 45 (TGGA…WIID), 71 to 91 (TPTM…VLWA), 94 to 114 (LNPY…VGFY), 133 to 153 (WRLL…VRLG), 169 to 189 (VAIN…VGAG), 200 to 220 (GLAI…SYLA), 240 to 260 (LSVL…FNAP), 264 to 284 (IFMG…IAVA), 289 to 309 (IVLA…IVQV), and 338 to 358 (QIVI…LSTL).

This sequence belongs to the glycosyltransferase 4 family. MraY subfamily. The cofactor is Mg(2+).

Its subcellular location is the cell inner membrane. The catalysed reaction is UDP-N-acetyl-alpha-D-muramoyl-L-alanyl-gamma-D-glutamyl-meso-2,6-diaminopimeloyl-D-alanyl-D-alanine + di-trans,octa-cis-undecaprenyl phosphate = di-trans,octa-cis-undecaprenyl diphospho-N-acetyl-alpha-D-muramoyl-L-alanyl-D-glutamyl-meso-2,6-diaminopimeloyl-D-alanyl-D-alanine + UMP. It functions in the pathway cell wall biogenesis; peptidoglycan biosynthesis. Catalyzes the initial step of the lipid cycle reactions in the biosynthesis of the cell wall peptidoglycan: transfers peptidoglycan precursor phospho-MurNAc-pentapeptide from UDP-MurNAc-pentapeptide onto the lipid carrier undecaprenyl phosphate, yielding undecaprenyl-pyrophosphoryl-MurNAc-pentapeptide, known as lipid I. The chain is Phospho-N-acetylmuramoyl-pentapeptide-transferase from Rhodopseudomonas palustris (strain BisB18).